The sequence spans 197 residues: Beta-crystallin A2 (197 aa).

Residues 1-11 form an N-terminal arm region; that stretch reads MSSAPAPGSAP. Beta/gamma crystallin 'Greek key' domains are found at residues 12 to 52 and 53 to 99; these read VCLT…KVEN and GAWV…RPVL. The interval 100–105 is connecting peptide; sequence CANHSD. 2 consecutive Beta/gamma crystallin 'Greek key' domains span residues 106-147 and 148-196; these read SRVT…KVSS and GAWV…RRVQ.

It belongs to the beta/gamma-crystallin family. Homo/heterodimer, or complexes of higher-order. The structure of beta-crystallin oligomers seems to be stabilized through interactions between the N-terminal arms.

Crystallins are the dominant structural components of the vertebrate eye lens. The sequence is that of Beta-crystallin A2 (Cryba2) from Mus musculus (Mouse).